The primary structure comprises 340 residues: Ketol-acid reductoisomerase (NADP(+)) (340 aa).

In terms of domain architecture, KARI N-terminal Rossmann spans Val3–Thr182. NADP(+)-binding positions include Tyr26 to Gln29, Arg49, Ser53, and Asp83 to Gln86. The active site involves His108. Gly134 is an NADP(+) binding site. The KARI C-terminal knotted domain occupies Thr183–Val328. Positions 191, 195, 227, and 231 each coordinate Mg(2+). Residue Ser252 participates in substrate binding.

This sequence belongs to the ketol-acid reductoisomerase family. It depends on Mg(2+) as a cofactor.

The enzyme catalyses (2R)-2,3-dihydroxy-3-methylbutanoate + NADP(+) = (2S)-2-acetolactate + NADPH + H(+). It carries out the reaction (2R,3R)-2,3-dihydroxy-3-methylpentanoate + NADP(+) = (S)-2-ethyl-2-hydroxy-3-oxobutanoate + NADPH + H(+). It functions in the pathway amino-acid biosynthesis; L-isoleucine biosynthesis; L-isoleucine from 2-oxobutanoate: step 2/4. The protein operates within amino-acid biosynthesis; L-valine biosynthesis; L-valine from pyruvate: step 2/4. In terms of biological role, involved in the biosynthesis of branched-chain amino acids (BCAA). Catalyzes an alkyl-migration followed by a ketol-acid reduction of (S)-2-acetolactate (S2AL) to yield (R)-2,3-dihydroxy-isovalerate. In the isomerase reaction, S2AL is rearranged via a Mg-dependent methyl migration to produce 3-hydroxy-3-methyl-2-ketobutyrate (HMKB). In the reductase reaction, this 2-ketoacid undergoes a metal-dependent reduction by NADPH to yield (R)-2,3-dihydroxy-isovalerate. The sequence is that of Ketol-acid reductoisomerase (NADP(+)) from Streptococcus gordonii (strain Challis / ATCC 35105 / BCRC 15272 / CH1 / DL1 / V288).